Here is a 207-residue protein sequence, read N- to C-terminus: Thiamine-phosphate synthase (207 aa).

4-amino-2-methyl-5-(diphosphooxymethyl)pyrimidine-binding positions include 38 to 42 (QYRAK) and asparagine 70. The Mg(2+) site is built by aspartate 71 and aspartate 90. Threonine 109 serves as a coordination point for 4-amino-2-methyl-5-(diphosphooxymethyl)pyrimidine. Residue 135-137 (TNS) participates in 2-[(2R,5Z)-2-carboxy-4-methylthiazol-5(2H)-ylidene]ethyl phosphate binding. Lysine 138 serves as a coordination point for 4-amino-2-methyl-5-(diphosphooxymethyl)pyrimidine. 2-[(2R,5Z)-2-carboxy-4-methylthiazol-5(2H)-ylidene]ethyl phosphate is bound by residues glycine 165 and 185–186 (IS).

Belongs to the thiamine-phosphate synthase family. Mg(2+) serves as cofactor.

The catalysed reaction is 2-[(2R,5Z)-2-carboxy-4-methylthiazol-5(2H)-ylidene]ethyl phosphate + 4-amino-2-methyl-5-(diphosphooxymethyl)pyrimidine + 2 H(+) = thiamine phosphate + CO2 + diphosphate. It carries out the reaction 2-(2-carboxy-4-methylthiazol-5-yl)ethyl phosphate + 4-amino-2-methyl-5-(diphosphooxymethyl)pyrimidine + 2 H(+) = thiamine phosphate + CO2 + diphosphate. It catalyses the reaction 4-methyl-5-(2-phosphooxyethyl)-thiazole + 4-amino-2-methyl-5-(diphosphooxymethyl)pyrimidine + H(+) = thiamine phosphate + diphosphate. Its pathway is cofactor biosynthesis; thiamine diphosphate biosynthesis; thiamine phosphate from 4-amino-2-methyl-5-diphosphomethylpyrimidine and 4-methyl-5-(2-phosphoethyl)-thiazole: step 1/1. Its function is as follows. Condenses 4-methyl-5-(beta-hydroxyethyl)thiazole monophosphate (THZ-P) and 2-methyl-4-amino-5-hydroxymethyl pyrimidine pyrophosphate (HMP-PP) to form thiamine monophosphate (TMP). The sequence is that of Thiamine-phosphate synthase from Clostridium perfringens (strain SM101 / Type A).